A 144-amino-acid polypeptide reads, in one-letter code: Small ribosomal subunit protein uS12 (144 aa).

3-methylthioaspartic acid is present on Asp-103. The interval 125 to 144 (QQGRSRYGAKKGKAAPAKKK) is disordered. Positions 131 to 144 (YGAKKGKAAPAKKK) are enriched in basic residues.

This sequence belongs to the universal ribosomal protein uS12 family. In terms of assembly, part of the 30S ribosomal subunit. Contacts proteins S8 and S17. May interact with IF1 in the 30S initiation complex.

In terms of biological role, with S4 and S5 plays an important role in translational accuracy. Its function is as follows. Interacts with and stabilizes bases of the 16S rRNA that are involved in tRNA selection in the A site and with the mRNA backbone. Located at the interface of the 30S and 50S subunits, it traverses the body of the 30S subunit contacting proteins on the other side and probably holding the rRNA structure together. The combined cluster of proteins S8, S12 and S17 appears to hold together the shoulder and platform of the 30S subunit. In Dehalococcoides mccartyi (strain ATCC BAA-2100 / JCM 16839 / KCTC 5957 / BAV1), this protein is Small ribosomal subunit protein uS12.